Consider the following 367-residue polypeptide: Sulfate/thiosulfate import ATP-binding protein CysA 2 (367 aa).

One can recognise an ABC transporter domain in the interval 3–237; that stretch reads VRVQNIRKEF…PVSPFVYGFI (235 aa). ATP is bound at residue 35–42; that stretch reads GPSGSGKT.

The protein belongs to the ABC transporter superfamily. Sulfate/tungstate importer (TC 3.A.1.6) family. In terms of assembly, the complex is composed of two ATP-binding proteins (CysA), two transmembrane proteins (CysT and CysW) and a solute-binding protein (CysP).

The protein localises to the cell inner membrane. The catalysed reaction is sulfate(out) + ATP + H2O = sulfate(in) + ADP + phosphate + H(+). The enzyme catalyses thiosulfate(out) + ATP + H2O = thiosulfate(in) + ADP + phosphate + H(+). In terms of biological role, part of the ABC transporter complex CysAWTP involved in sulfate/thiosulfate import. Responsible for energy coupling to the transport system. This is Sulfate/thiosulfate import ATP-binding protein CysA 2 from Rhizobium meliloti (strain 1021) (Ensifer meliloti).